We begin with the raw amino-acid sequence, 114 residues long: Late cornified envelope protein 1D (114 aa).

The segment covering 1–10 has biased composition (low complexity); sequence MSCQQSQQQC. Disordered regions lie at residues 1–21 and 75–114; these read MSCQQSQQQCQPPPKCTPKCT and HHRRHRSHRRRPQSSDCCSQPSGGSSCCGGGSSQHSGGCC. Residues 75–86 are compositionally biased toward basic residues; sequence HHRRHRSHRRRP. Over residues 88-99 the composition is skewed to low complexity; sequence SSDCCSQPSGGS.

It belongs to the LCE family. As to quaternary structure, interacts with CYSRT1. Skin-specific. Expression was readily detected in adult trunk skin, adult arm skin, fetal skin, penal skin, vulva, esophagus and tongue. Not expressed in the cervix, rectum, lung, colon, or placenta.

Functionally, precursors of the cornified envelope of the stratum corneum. The polypeptide is Late cornified envelope protein 1D (LCE1D) (Homo sapiens (Human)).